Consider the following 115-residue polypeptide: Large ribosomal subunit protein bL19 (115 aa).

This sequence belongs to the bacterial ribosomal protein bL19 family.

Its function is as follows. This protein is located at the 30S-50S ribosomal subunit interface and may play a role in the structure and function of the aminoacyl-tRNA binding site. In Streptococcus pneumoniae serotype 2 (strain D39 / NCTC 7466), this protein is Large ribosomal subunit protein bL19.